The primary structure comprises 291 residues: Pantothenate synthetase (291 aa).

Residue 30-37 (MGYLHAGH) participates in ATP binding. His37 functions as the Proton donor in the catalytic mechanism. Residue Gln61 coordinates (R)-pantoate. Gln61 is a binding site for beta-alanine. 147 to 150 (GEKD) is a binding site for ATP. Gln153 lines the (R)-pantoate pocket. ATP-binding positions include Val176 and 184 to 187 (LSSR).

The protein belongs to the pantothenate synthetase family. As to quaternary structure, homodimer.

It localises to the cytoplasm. It carries out the reaction (R)-pantoate + beta-alanine + ATP = (R)-pantothenate + AMP + diphosphate + H(+). Its pathway is cofactor biosynthesis; (R)-pantothenate biosynthesis; (R)-pantothenate from (R)-pantoate and beta-alanine: step 1/1. Its function is as follows. Catalyzes the condensation of pantoate with beta-alanine in an ATP-dependent reaction via a pantoyl-adenylate intermediate. The protein is Pantothenate synthetase of Rhizobium rhizogenes (strain K84 / ATCC BAA-868) (Agrobacterium radiobacter).